A 214-amino-acid polypeptide reads, in one-letter code: 3-isopropylmalate dehydratase small subunit (214 aa).

It belongs to the LeuD family. LeuD type 1 subfamily. In terms of assembly, heterodimer of LeuC and LeuD.

The catalysed reaction is (2R,3S)-3-isopropylmalate = (2S)-2-isopropylmalate. It functions in the pathway amino-acid biosynthesis; L-leucine biosynthesis; L-leucine from 3-methyl-2-oxobutanoate: step 2/4. In terms of biological role, catalyzes the isomerization between 2-isopropylmalate and 3-isopropylmalate, via the formation of 2-isopropylmaleate. The protein is 3-isopropylmalate dehydratase small subunit of Pseudomonas fluorescens (strain ATCC BAA-477 / NRRL B-23932 / Pf-5).